Consider the following 251-residue polypeptide: Chromobox protein homolog 7 (251 aa).

Residues 11 to 69 form the Chromo domain; it reads FAVESIRKKRVRKGKVEYLVKWKGWPPKYSTWEPEEHILDPRLVMAYEEKEERDRASGY. The segment at 190-220 is disordered; sequence EPAAQPPEEEADADLAEGPPPWTPALPSSEV. The tract at residues 223–236 is required for cellular lifespan extension; sequence TDITANSITVTFRE.

Component of a PRC1-like complex. Interacts with RING1 and RNF2/RING1B, but not with BMI1, EED or EZH2. Interacts with PCGF1, PCGF2, PCGF3, PCGF5 and PCGF6.

The protein resides in the nucleus. Component of a Polycomb group (PcG) multiprotein PRC1-like complex, a complex class required to maintain the transcriptionally repressive state of many genes, including Hox genes, throughout development. PcG PRC1 complex acts via chromatin remodeling and modification of histones; it mediates monoubiquitination of histone H2A 'Lys-119', rendering chromatin heritably changed in its expressibility. Promotes histone H3 trimethylation at 'Lys-9' (H3K9me3). Binds to trimethylated lysine residues in histones, and possibly also other proteins. Regulator of cellular lifespan by maintaining the repression of CDKN2A, but not by inducing telomerase activity. In Homo sapiens (Human), this protein is Chromobox protein homolog 7 (CBX7).